A 142-amino-acid chain; its full sequence is Acetyltransferase SG1711 (142 aa).

The region spanning 1-142 (MEIRVFRHDD…GKRLIEDQEY (142 aa)) is the N-acetyltransferase domain.

The protein belongs to the acetyltransferase family. YpeA subfamily.

In Sodalis glossinidius (strain morsitans), this protein is Acetyltransferase SG1711.